The chain runs to 368 residues: Flagellar P-ring protein (368 aa).

Residues 1–24 (MNSIFRKIVFAAFLLLALPQFALA) form the signal peptide.

This sequence belongs to the FlgI family. The basal body constitutes a major portion of the flagellar organelle and consists of four rings (L,P,S, and M) mounted on a central rod.

It is found in the periplasm. It localises to the bacterial flagellum basal body. In terms of biological role, assembles around the rod to form the L-ring and probably protects the motor/basal body from shearing forces during rotation. This is Flagellar P-ring protein from Geotalea uraniireducens (strain Rf4) (Geobacter uraniireducens).